We begin with the raw amino-acid sequence, 314 residues long: Protoheme IX farnesyltransferase (314 aa).

8 helical membrane passes run 36-56, 65-85, 114-134, 135-155, 179-199, 237-257, 259-279, and 290-310; these read IGIV…AISF, WGTF…GCIV, SVLT…MFTS, WYAT…YTIW, WAAI…IMFI, IIVY…TMGI, FAVI…TGLF, and IFIF…IVKL.

Belongs to the UbiA prenyltransferase family. Protoheme IX farnesyltransferase subfamily. In terms of assembly, interacts with CtaA.

Its subcellular location is the cell membrane. It carries out the reaction heme b + (2E,6E)-farnesyl diphosphate + H2O = Fe(II)-heme o + diphosphate. It participates in porphyrin-containing compound metabolism; heme O biosynthesis; heme O from protoheme: step 1/1. Converts heme B (protoheme IX) to heme O by substitution of the vinyl group on carbon 2 of heme B porphyrin ring with a hydroxyethyl farnesyl side group. In Oceanobacillus iheyensis (strain DSM 14371 / CIP 107618 / JCM 11309 / KCTC 3954 / HTE831), this protein is Protoheme IX farnesyltransferase.